Reading from the N-terminus, the 186-residue chain is RIO-type serine/threonine-protein kinase Rio1 (186 aa).

Lys-15 is a binding site for ATP. Asp-124 functions as the Proton acceptor in the catalytic mechanism. Residues Asn-129 and Asp-140 each coordinate Mg(2+). Asp-140 functions as the 4-aspartylphosphate intermediate in the catalytic mechanism.

This sequence belongs to the protein kinase superfamily. RIO-type Ser/Thr kinase family.

The catalysed reaction is L-seryl-[protein] + ATP = O-phospho-L-seryl-[protein] + ADP + H(+). The enzyme catalyses L-threonyl-[protein] + ATP = O-phospho-L-threonyl-[protein] + ADP + H(+). It carries out the reaction ATP + H2O = ADP + phosphate + H(+). Its function is as follows. Despite the protein kinase domain is proposed to act predominantly as an ATPase. The protein is RIO-type serine/threonine-protein kinase Rio1 (rio1) of Thermoplasma acidophilum (strain ATCC 25905 / DSM 1728 / JCM 9062 / NBRC 15155 / AMRC-C165).